Here is a 401-residue protein sequence, read N- to C-terminus: MALLNLFFCLVFSSPLMAMPPVLQGRKSMSPDSILKDTSTDDGARDFQGRKFPQFMMQLYQNIIRGRDKDLSNLEHPTLQESDTVQSFITKSYTTVGNHWTLFFDMSSISRSNELKLAELRFSLPSFRKSHSVTVDIYHTNDGKEKLFMGSFKTKPSAALDADCKVFNLTILLQNFLTRGKRLIKDEYIQAKGLHLKDLEKSATEKGTENVDTLKQDQYHVSDFAAERIMLVVFAKEQSHAKSDPPSLGKKLFPSKYGIDDNANKVNGFRRLRRNKKEKTQIHVSTGPPKPIEEIKPKCKKVDMFVDFQKIGWGSWIVYPKAYNAYRCESTCAVPLNETENATNHSYIKSLLPLSDMERKECPSCVPVKMMSMSMLYYENEDFILRHHEEMIVEECGFKDM.

The first 18 residues, 1–18, serve as a signal peptide directing secretion; sequence MALLNLFFCLVFSSPLMA. Residues 19 to 274 constitute a propeptide that is removed on maturation; sequence MPPVLQGRKS…KVNGFRRLRR (256 aa). Asn168, Asn337, Asn341, and Asn344 each carry an N-linked (GlcNAc...) asparagine glycan. Intrachain disulfides connect Cys299-Cys365 and Cys328-Cys396.

The protein belongs to the TGF-beta family. In terms of assembly, monomer. The propeptide region interacts with bmp4 in a non-covalent manner. In terms of tissue distribution, expressed in the dorsal marginal region of late blastula, becoming restricted to the dorsal blastopore lip (Spemann organizer) at the early gastrula stage.

It is found in the secreted. Its function is as follows. Exhibits mesoderm-dorsalizing activity and neural-inducing activity, but lacks mesoderm-inducing activity. Regulates the expression of specific mesodermal and neural genes. Induces convergent extension movements at the embryonic midline by activating the fgf signaling pathway to induce t/bra expression in the organizer region. Acts with wnt11 to induce Spemann organizer cells and induce axis formation. The unprocessed protein antagonizes bmp-signaling. The sequence is that of Nodal homolog 3-B (nodal3-b) from Xenopus laevis (African clawed frog).